A 748-amino-acid chain; its full sequence is Meprin A subunit alpha (748 aa).

Residues 1 to 20 form the signal peptide; the sequence is MLWTLPVCLLSLSFSAHIAA. Residues 21-66 constitute a propeptide that is removed on maturation; it reads VSIQHLSTGHDHDDVDVGEQQKDISEINSAAGLNLFQGDILLPRTR. The region spanning 67–261 is the Peptidase M12A domain; sequence NALRDPSSRW…TRLNRMYNCT (195 aa). Residues 67–719 are Extracellular-facing; the sequence is NALRDPSSRW…RCQAMHVHGS (653 aa). 3 disulfide bridges follow: Cys108/Cys260, Cys129/Cys148, and Cys270/Cys432. N-linked (GlcNAc...) asparagine glycosylation is present at Asn141. His156 serves as a coordination point for Zn(2+). Glu157 is an active-site residue. Positions 160 and 166 each coordinate Zn(2+). Asn223, Asn259, Asn319, Asn441, and Asn542 each carry an N-linked (GlcNAc...) asparagine glycan. Residues 265-434 enclose the MAM domain; it reads TLLDHCAFEK…ITLTETPCPT (170 aa). Residues 435-596 form the MATH domain; sequence GVWTIRNISQ…DDTLIIFVDF (162 aa). Residues 641-668 form a disordered region; the sequence is LPRRLDQRQPSRPKRSVENTGPMEDHNW. Residues 672-712 enclose the EGF-like domain; that stretch reads FRDPCDPNPCQNEGTCVNVKGMASCRCVSGHAFFYTGERCQ. Disulfide bonds link Cys676–Cys687, Cys681–Cys696, and Cys698–Cys711. The chain crosses the membrane as a helical span at residues 720–739; the sequence is LLGLLIGCITALIFLTFITF. Residues 740–748 lie on the Cytoplasmic side of the membrane; sequence SNTYQKLRQ.

Homotetramer consisting of disulfide-linked alpha subunits, homooligomer consisting of disulfide-linked alpha subunit homodimers, or heterotetramer of two alpha and two beta subunits formed by non-covalent association of two disulfide-linked heterodimers. Interacts with MBL2 through its carbohydrate moiety. This interaction may inhibit its catalytic activity. It depends on Zn(2+) as a cofactor. In terms of processing, N-glycosylated; contains GlcNAc, galactose, mannose and a small amount of fucose. Colocalized with E-24.11 in proximal tubules of juxtamedullary nephrons.

The protein localises to the membrane. It catalyses the reaction Hydrolysis of protein and peptide substrates preferentially on carboxyl side of hydrophobic residues.. Inhibited by actinonin. The sequence is that of Meprin A subunit alpha (Mep1a) from Rattus norvegicus (Rat).